The primary structure comprises 306 residues: MGTDGMAGRAILIAGPTASGKSALALALARARGGVVINADSMQVYADLRVLTARPNPAEEAQAPHRLYGSVDGAVNFSVGHYLAAVGEVLREVWAAGGLPIVVGGTGLYFKALLEGLSEIPPVPEAVRTALRAEAEGRETAALHADLARRDPEGAARLGAHDRLRVLRALEVLAATGRPLSAFQGSRRPGPLAGMPCDKLFLVPDRALLRARIDARFLAMMEEGALDEVARLRARRLDPMLPVMRAHGVPGLIAFLDGALTREEAVARGQADTRAYAKRQVTWFRHQAGAGWRWLAPEAAMREAGG.

Residue 15–22 (GPTASGKS) participates in ATP binding. 17-22 (TASGKS) contacts substrate. Residues 40–43 (DSMQ) form an interaction with substrate tRNA region.

It belongs to the IPP transferase family. As to quaternary structure, monomer. It depends on Mg(2+) as a cofactor.

It catalyses the reaction adenosine(37) in tRNA + dimethylallyl diphosphate = N(6)-dimethylallyladenosine(37) in tRNA + diphosphate. In terms of biological role, catalyzes the transfer of a dimethylallyl group onto the adenine at position 37 in tRNAs that read codons beginning with uridine, leading to the formation of N6-(dimethylallyl)adenosine (i(6)A). In Methylobacterium sp. (strain 4-46), this protein is tRNA dimethylallyltransferase.